A 668-amino-acid chain; its full sequence is Macrolide export ATP-binding/permease protein MacB 1/2 (668 aa).

The ABC transporter domain occupies 9-247; the sequence is IRLRGVGREY…PGPGPAQAPQ (239 aa). 45 to 52 contributes to the ATP binding site; the sequence is GASGSGKS. Positions 230-257 are disordered; sequence RTGAPAADPGPGPAQAPQPAPQPAPVQA. Residues 237–255 show a composition bias toward pro residues; the sequence is DPGPGPAQAPQPAPQPAPV. 4 helical membrane passes run 294-314, 541-561, 598-618, and 634-654; these read FLTM…VALG, LALL…IGVM, LVCV…GLAF, and MLAA…LPAV.

This sequence belongs to the ABC transporter superfamily. Macrolide exporter (TC 3.A.1.122) family. As to quaternary structure, homodimer.

The protein resides in the cell inner membrane. Its function is as follows. Non-canonical ABC transporter that contains transmembrane domains (TMD), which form a pore in the inner membrane, and an ATP-binding domain (NBD), which is responsible for energy generation. Confers resistance against macrolides. This chain is Macrolide export ATP-binding/permease protein MacB 1/2, found in Paracoccus denitrificans (strain Pd 1222).